A 180-amino-acid polypeptide reads, in one-letter code: Large ribosomal subunit protein uL5 (180 aa).

It belongs to the universal ribosomal protein uL5 family. Part of the 50S ribosomal subunit; part of the 5S rRNA/L5/L18/L25 subcomplex. Contacts the 5S rRNA and the P site tRNA. Forms a bridge to the 30S subunit in the 70S ribosome.

Its function is as follows. This is one of the proteins that bind and probably mediate the attachment of the 5S RNA into the large ribosomal subunit, where it forms part of the central protuberance. In the 70S ribosome it contacts protein S13 of the 30S subunit (bridge B1b), connecting the 2 subunits; this bridge is implicated in subunit movement. Contacts the P site tRNA; the 5S rRNA and some of its associated proteins might help stabilize positioning of ribosome-bound tRNAs. In Streptococcus uberis (strain ATCC BAA-854 / 0140J), this protein is Large ribosomal subunit protein uL5.